We begin with the raw amino-acid sequence, 232 residues long: PsbP domain-containing protein 2, chloroplastic (232 aa).

The transit peptide at 1–34 (MWSQSFLGSAPKLCLFSSSLPPFSHHKIHKFFCF) directs the protein to the chloroplast. The N-terminal 37 residues, 35-71 (AQNPSSTVSINLSKRHLNLSILTLFFNGFLLDNKAKS), are a transit peptide targeting the thylakoid.

Belongs to the PsbP family.

It localises to the plastid. Its subcellular location is the chloroplast thylakoid lumen. This Arabidopsis thaliana (Mouse-ear cress) protein is PsbP domain-containing protein 2, chloroplastic (PPD2).